Here is a 343-residue protein sequence, read N- to C-terminus: Heat-inducible transcription repressor HrcA (343 aa).

It belongs to the HrcA family.

In terms of biological role, negative regulator of class I heat shock genes (grpE-dnaK-dnaJ and groELS operons). Prevents heat-shock induction of these operons. The polypeptide is Heat-inducible transcription repressor HrcA (Clostridium acetobutylicum (strain ATCC 824 / DSM 792 / JCM 1419 / IAM 19013 / LMG 5710 / NBRC 13948 / NRRL B-527 / VKM B-1787 / 2291 / W)).